The sequence spans 301 residues: Acetyl-coenzyme A carboxylase carboxyl transferase subunit beta (301 aa).

The region spanning 23-292 (VWTKCDSCGQ…PSPDEPRESV (270 aa)) is the CoA carboxyltransferase N-terminal domain. 4 residues coordinate Zn(2+): Cys-27, Cys-30, Cys-46, and Cys-49. The C4-type zinc finger occupies 27 to 49 (CDSCGQVLYRAELERNLEVCPKC). Positions 280–301 (LPAPSPDEPRESVVVPDQEPEA) are disordered.

Belongs to the AccD/PCCB family. As to quaternary structure, acetyl-CoA carboxylase is a heterohexamer composed of biotin carboxyl carrier protein (AccB), biotin carboxylase (AccC) and two subunits each of ACCase subunit alpha (AccA) and ACCase subunit beta (AccD). The cofactor is Zn(2+).

It is found in the cytoplasm. The enzyme catalyses N(6)-carboxybiotinyl-L-lysyl-[protein] + acetyl-CoA = N(6)-biotinyl-L-lysyl-[protein] + malonyl-CoA. The protein operates within lipid metabolism; malonyl-CoA biosynthesis; malonyl-CoA from acetyl-CoA: step 1/1. Its function is as follows. Component of the acetyl coenzyme A carboxylase (ACC) complex. Biotin carboxylase (BC) catalyzes the carboxylation of biotin on its carrier protein (BCCP) and then the CO(2) group is transferred by the transcarboxylase to acetyl-CoA to form malonyl-CoA. The polypeptide is Acetyl-coenzyme A carboxylase carboxyl transferase subunit beta (Enterobacter sp. (strain 638)).